A 475-amino-acid polypeptide reads, in one-letter code: Trifunctional enzyme subunit beta, mitochondrial (475 aa).

The N-terminal 34 residues, 1–34 (MTTILTSTFRNLSTTSKWALRSSIRPLSCSSQLH), are a transit peptide targeting the mitochondrion. Lys53 carries the N6-succinyllysine modification. Lys73 is subject to N6-acetyllysine; alternate. Lys73 is modified (N6-succinyllysine; alternate). Catalysis depends on Cys139, which acts as the Acyl-thioester intermediate. An intramembrane segment occupies 174–221 (IRHSRNMRKMMLDLNKAKTLGQRLSLLSKFRLNFLSPELPAVAEFSTN). An N6-acetyllysine; alternate modification is found at Lys189. Lys189 is modified (N6-succinyllysine; alternate). 3 positions are modified to N6-succinyllysine: Lys191, Lys273, and Lys292. Lys294 carries the N6-acetyllysine; alternate modification. Residue Lys294 is modified to N6-succinyllysine; alternate. N6-acetyllysine is present on Lys299. Lys333 is subject to N6-acetyllysine; alternate. Lys333 carries the N6-succinyllysine; alternate modification. Residues Lys349 and Lys362 each carry the N6-acetyllysine modification. The active-site Proton donor/acceptor is Cys459.

The protein belongs to the thiolase-like superfamily. Thiolase family. In terms of assembly, heterotetramer of 2 alpha/HADHA and 2 beta/HADHB subunits; forms the mitochondrial trifunctional enzyme. Also purified as higher order heterooligomers including a 4 alpha/HADHA and 4 beta/HADHB heterooligomer which physiological significance remains unclear. The mitochondrial trifunctional enzyme interacts with MTLN. Interacts with RSAD2/viperin. Acetylation of Lys-202 is observed in liver mitochondria from fasted mice but not from fed mice.

The protein localises to the mitochondrion. It localises to the mitochondrion inner membrane. It is found in the mitochondrion outer membrane. Its subcellular location is the endoplasmic reticulum. It catalyses the reaction an acyl-CoA + acetyl-CoA = a 3-oxoacyl-CoA + CoA. It carries out the reaction butanoyl-CoA + acetyl-CoA = 3-oxohexanoyl-CoA + CoA. The catalysed reaction is hexanoyl-CoA + acetyl-CoA = 3-oxooctanoyl-CoA + CoA. The enzyme catalyses octanoyl-CoA + acetyl-CoA = 3-oxodecanoyl-CoA + CoA. It catalyses the reaction decanoyl-CoA + acetyl-CoA = 3-oxododecanoyl-CoA + CoA. It carries out the reaction dodecanoyl-CoA + acetyl-CoA = 3-oxotetradecanoyl-CoA + CoA. The catalysed reaction is tetradecanoyl-CoA + acetyl-CoA = 3-oxohexadecanoyl-CoA + CoA. It functions in the pathway lipid metabolism; fatty acid beta-oxidation. Mitochondrial trifunctional enzyme catalyzes the last three of the four reactions of the mitochondrial beta-oxidation pathway. The mitochondrial beta-oxidation pathway is the major energy-producing process in tissues and is performed through four consecutive reactions breaking down fatty acids into acetyl-CoA. Among the enzymes involved in this pathway, the trifunctional enzyme exhibits specificity for long-chain fatty acids. Mitochondrial trifunctional enzyme is a heterotetrameric complex composed of two proteins, the trifunctional enzyme subunit alpha/HADHA carries the 2,3-enoyl-CoA hydratase and the 3-hydroxyacyl-CoA dehydrogenase activities, while the trifunctional enzyme subunit beta/HADHB described here bears the 3-ketoacyl-CoA thiolase activity. This Mus musculus (Mouse) protein is Trifunctional enzyme subunit beta, mitochondrial (Hadhb).